We begin with the raw amino-acid sequence, 114 residues long: Large ribosomal subunit protein eL31 (114 aa).

Belongs to the eukaryotic ribosomal protein eL31 family.

This chain is Large ribosomal subunit protein eL31 (RPL31), found in Eremothecium gossypii (strain ATCC 10895 / CBS 109.51 / FGSC 9923 / NRRL Y-1056) (Yeast).